A 205-amino-acid polypeptide reads, in one-letter code: SCO2-like protein RP587 (205 aa).

Positions 82, 86, and 172 each coordinate Cu cation.

This sequence belongs to the SCO1/2 family.

In Rickettsia prowazekii (strain Madrid E), this protein is SCO2-like protein RP587.